Reading from the N-terminus, the 284-residue chain is NH(3)-dependent NAD(+) synthetase (284 aa).

Residue 51–58 (GISGGIDS) coordinates ATP. Position 57 (Asp57) interacts with Mg(2+). Arg148 contributes to the deamido-NAD(+) binding site. Residue Thr168 coordinates ATP. Mg(2+) is bound at residue Glu173. Deamido-NAD(+)-binding residues include Lys181 and Asp188. ATP is bound by residues Lys197 and Thr219. 268–269 (HK) lines the deamido-NAD(+) pocket.

This sequence belongs to the NAD synthetase family. Homodimer.

The catalysed reaction is deamido-NAD(+) + NH4(+) + ATP = AMP + diphosphate + NAD(+) + H(+). Its pathway is cofactor biosynthesis; NAD(+) biosynthesis; NAD(+) from deamido-NAD(+) (ammonia route): step 1/1. Functionally, catalyzes the ATP-dependent amidation of deamido-NAD to form NAD. Uses ammonia as a nitrogen source. The chain is NH(3)-dependent NAD(+) synthetase from Burkholderia pseudomallei (strain 1106a).